Consider the following 504-residue polypeptide: Maturase K (504 aa).

This sequence belongs to the intron maturase 2 family. MatK subfamily.

It is found in the plastid. It localises to the chloroplast. Usually encoded in the trnK tRNA gene intron. Probably assists in splicing its own and other chloroplast group II introns. This is Maturase K from Capsella bursa-pastoris (Shepherd's purse).